Reading from the N-terminus, the 585-residue chain is A-type ATP synthase subunit A (585 aa).

235-242 (GPFGSGKT) is an ATP binding site.

This sequence belongs to the ATPase alpha/beta chains family. As to quaternary structure, has multiple subunits with at least A(3), B(3), C, D, E, F, H, I and proteolipid K(x).

It localises to the cell membrane. The enzyme catalyses ATP + H2O + 4 H(+)(in) = ADP + phosphate + 5 H(+)(out). In terms of biological role, component of the A-type ATP synthase that produces ATP from ADP in the presence of a proton gradient across the membrane. The A chain is the catalytic subunit. The sequence is that of A-type ATP synthase subunit A from Halobacterium salinarum (strain ATCC 29341 / DSM 671 / R1).